The primary structure comprises 389 residues: Equilibrative nucleotide transporter 8 (389 aa).

The next 10 helical transmembrane spans lie at 19-39, 57-77, 87-107, 119-139, 150-170, 187-207, 238-258, 266-286, 331-351, and 367-387; these read VAYV…NALI, TFTV…MTWN, NLGF…DWVW, LMVG…GSLI, MQAI…LRIA, HSYF…CNVL, WPAS…PGFI, LLQS…DFVG, VVVL…VLMI, and IFMV…GWLW.

This sequence belongs to the SLC29A/ENT transporter (TC 2.A.57) family. In terms of tissue distribution, expressed in stems, flowers and siliques.

It is found in the cell membrane. Its function is as follows. May be involved in nucleoside transport. The sequence is that of Equilibrative nucleotide transporter 8 (ETN8) from Arabidopsis thaliana (Mouse-ear cress).